The sequence spans 564 residues: Putative zinc metalloproteinase in scaA 5'region (564 aa).

The region spanning methionine 1–phenylalanine 564 is the Peptidase M13 domain. Residue histidine 478 participates in Zn(2+) binding. Glutamate 479 is an active-site residue. Histidine 482 and glutamate 538 together coordinate Zn(2+). Aspartate 542 (proton donor) is an active-site residue.

It belongs to the peptidase M13 family. Zn(2+) is required as a cofactor.

This is Putative zinc metalloproteinase in scaA 5'region from Streptococcus gordonii (strain Challis / ATCC 35105 / BCRC 15272 / CH1 / DL1 / V288).